The sequence spans 205 residues: MSRFTGPRLKVMRALGIDLPGLSRKTIEARPTPPGQHGAKNTRRKKSDFGVKLQEKQKLRFNYGLSEKQLRRLMVDARKGKSPTGETLLQLLERRLDNVVFRAGFAPTIAAARQLVTHRHVMLNGKSVNIPSIRVRVGDEISLKASSTKLPIVVETLANPPLTRPEWISWAEQSQQAKVAHLPAAEDVPFPVDVQQVVEYYANRL.

The segment at 25 to 48 (KTIEARPTPPGQHGAKNTRRKKSD) is disordered. Positions 94-157 (RRLDNVVFRA…TKLPIVVETL (64 aa)) constitute an S4 RNA-binding domain.

The protein belongs to the universal ribosomal protein uS4 family. In terms of assembly, part of the 30S ribosomal subunit. Contacts protein S5. The interaction surface between S4 and S5 is involved in control of translational fidelity.

Functionally, one of the primary rRNA binding proteins, it binds directly to 16S rRNA where it nucleates assembly of the body of the 30S subunit. Its function is as follows. With S5 and S12 plays an important role in translational accuracy. The sequence is that of Small ribosomal subunit protein uS4 from Methylobacillus flagellatus (strain ATCC 51484 / DSM 6875 / VKM B-1610 / KT).